A 395-amino-acid polypeptide reads, in one-letter code: Probable nitrate/nitrite transporter NarK2 (395 aa).

Transmembrane regions (helical) follow at residues 8 to 28, 45 to 65, 72 to 92, 98 to 118, 131 to 151, 157 to 177, 205 to 225, 244 to 266, 274 to 294, 301 to 321, 333 to 353, and 365 to 385; these read LVLATWISVVNFWAWNLIGPL, LLVATPILVGALGRIVTGPLT, AMLIAVTLASILPVLAVGVAA, ALLVFFGLFLGVAGTIFAVGI, GFSTGVFGMGMVGTALSAFFT, WFGLFTTHAIVAAALASTAVV, LPVTWEMSFLYAIVFGGFVAF, AGARTAGFALAAVLARPVGGWLS, VVLASLAGTALLAFAAALQPP, ATFITLAVCLGVGTGGVFAWV, VTGIVAAAGGLGGYFPPLVMG, and VGLLLLVATALVACTYTALHA.

Belongs to the major facilitator superfamily. Nitrate/nitrite porter (TC 2.A.1.8) family.

Its subcellular location is the cell membrane. Functionally, involved in excretion of nitrite produced by the dissimilatory reduction of nitrate. The chain is Probable nitrate/nitrite transporter NarK2 (narK2) from Mycobacterium tuberculosis (strain CDC 1551 / Oshkosh).